The chain runs to 596 residues: Pentatricopeptide repeat-containing protein At1g50270 (596 aa).

PPR repeat units follow at residues 66–102 (SIQL…GVIP), 103–136 (SRHT…GLDS), 137–167 (DPFV…AEDK), 168–202 (DVVT…GVAA), 203–237 (NEMT…GRVK), 239–269 (DVFI…MPSR), 270–304 (NVVT…DVAP), 305–339 (NEKT…SIEI), 340–370 (NTTA…LHEK), 371–405 (NVYT…HVSP), 406–436 (NEVT…MKGR), and 442–472 (KADH…MPME). The segment at 477-552 (VWGALFGSCL…SPGFSWIEVK (76 aa)) is type E motif. The tract at residues 553–584 (GKLCEFIAFDDKKPLESDDLYKTLDTVGVQMR) is type E(+) motif.

Belongs to the PPR family. PCMP-E subfamily.

The sequence is that of Pentatricopeptide repeat-containing protein At1g50270 (PCMP-E42) from Arabidopsis thaliana (Mouse-ear cress).